A 209-amino-acid chain; its full sequence is Transcription antitermination protein NusB (209 aa).

Belongs to the NusB family.

Functionally, involved in transcription antitermination. Required for transcription of ribosomal RNA (rRNA) genes. Binds specifically to the boxA antiterminator sequence of the ribosomal RNA (rrn) operons. The sequence is that of Transcription antitermination protein NusB from Crocosphaera subtropica (strain ATCC 51142 / BH68) (Cyanothece sp. (strain ATCC 51142)).